The following is a 961-amino-acid chain: Copper-exporting P-type ATPase (961 aa).

HMA domains follow at residues 3–64 (QTTL…YQAT) and 69–130 (PDVE…YHAT). 4 residues coordinate Cu(+): cysteine 14, cysteine 17, cysteine 80, and cysteine 83. Disordered regions lie at residues 131–153 (QQGI…PESL) and 178–201 (VLPT…TASA). Over residues 142 to 151 (LTHSAQSQPE) the composition is skewed to polar residues. One can recognise an HMA 3 domain in the interval 226–289 (ESVQLLLTGM…AVKNAGYGAE (64 aa)). Cu(+)-binding residues include cysteine 237 and cysteine 240. 5 consecutive transmembrane segments (helical) span residues 316-336 (AALG…GGSM), 345-365 (PWLI…GHFY), 381-401 (TLVA…NIWP), 565-585 (AVFV…WYFF), and 592-612 (VYTL…ALGL). Aspartate 650 functions as the 4-aspartylphosphate intermediate in the catalytic mechanism. Aspartate 847 and aspartate 851 together coordinate Mg(2+). 3 helical membrane-spanning segments follow: residues 860-880 (VGIA…ITLM), 906-926 (LGAF…LYPF), and 928-948 (GTLL…ITVV).

It belongs to the cation transport ATPase (P-type) (TC 3.A.3) family. Type IB subfamily.

It localises to the cell membrane. The enzyme catalyses Cu(+)(in) + ATP + H2O = Cu(+)(out) + ADP + phosphate + H(+). In terms of biological role, involved in copper export. This is Copper-exporting P-type ATPase (copA) from Yersinia pestis.